We begin with the raw amino-acid sequence, 473 residues long: Protein translocase subunit SecD (473 aa).

Transmembrane regions (helical) follow at residues 5–25, 316–336, 337–357, 364–384, 409–429, and 436–456; these read VLVK…LLYP, ASLY…KSGG, IISN…MAAF, PGIA…VLIL, WSAI…LFQF, and GFAV…VFVT.

The protein belongs to the SecD/SecF family. SecD subfamily. As to quaternary structure, forms a complex with SecF. Part of the essential Sec protein translocation apparatus which comprises SecA, SecYEG and auxiliary proteins SecDF. Other proteins may also be involved.

Its subcellular location is the cell inner membrane. Its function is as follows. Part of the Sec protein translocase complex. Interacts with the SecYEG preprotein conducting channel. SecDF uses the proton motive force (PMF) to complete protein translocation after the ATP-dependent function of SecA. The sequence is that of Protein translocase subunit SecD from Elusimicrobium minutum (strain Pei191).